A 300-amino-acid chain; its full sequence is Ribosomal protein L11 methyltransferase (300 aa).

S-adenosyl-L-methionine is bound by residues T152, G173, D195, and N234.

The protein belongs to the methyltransferase superfamily. PrmA family.

It localises to the cytoplasm. It carries out the reaction L-lysyl-[protein] + 3 S-adenosyl-L-methionine = N(6),N(6),N(6)-trimethyl-L-lysyl-[protein] + 3 S-adenosyl-L-homocysteine + 3 H(+). Methylates ribosomal protein L11. This is Ribosomal protein L11 methyltransferase from Burkholderia ambifaria (strain ATCC BAA-244 / DSM 16087 / CCUG 44356 / LMG 19182 / AMMD) (Burkholderia cepacia (strain AMMD)).